The sequence spans 1025 residues: DNA ligase 4 (1025 aa).

The disordered stretch occupies residues 1–36 (MMQPTPAPSSAPGSPQRTQAEPEMETPSYPQPPQNV). Residues glutamate 289, lysine 291, leucine 292, arginine 296, glutamate 349, phenylalanine 387, glutamate 447, lysine 452, lysine 469, and lysine 471 each contribute to the ATP site. The active-site N6-AMP-lysine intermediate is lysine 291. Residue glutamate 349 coordinates Mg(2+). A Mg(2+)-binding site is contributed by glutamate 447. A BRCT 1 domain is found at 667-763 (VKTDIFNGMK…EPAPFKKKYF (97 aa)). Residues 773 to 904 (ADEYNEDDGE…TTPDVDGDVK (132 aa)) are disordered. Composition is skewed to acidic residues over residues 775–785 (EYNEDDGEEEG) and 806–816 (SETEDEDEEQA). Basic and acidic residues predominate over residues 817-838 (PEIKEEQDGELHEWLKVDDRKS). Residues 845–870 (DEEDSVTEDDSDNADVADEEEPDLDD) show a composition bias toward acidic residues. The span at 891–904 (RHRETTPDVDGDVK) shows a compositional bias: basic and acidic residues. Residues 915–1025 (DPDVIFKHLC…TLLDEEEFAP (111 aa)) form the BRCT 2 domain.

It belongs to the ATP-dependent DNA ligase family. Requires Mg(2+) as cofactor.

It is found in the nucleus. The enzyme catalyses ATP + (deoxyribonucleotide)n-3'-hydroxyl + 5'-phospho-(deoxyribonucleotide)m = (deoxyribonucleotide)n+m + AMP + diphosphate.. DNA ligase involved in DNA non-homologous end joining (NHEJ); required for double-strand break (DSB) repair. This chain is DNA ligase 4 (LIG4), found in Coprinopsis cinerea (Inky cap fungus).